The following is a 121-amino-acid chain: Large ribosomal subunit protein bL12 (121 aa).

It belongs to the bacterial ribosomal protein bL12 family. In terms of assembly, homodimer. Part of the ribosomal stalk of the 50S ribosomal subunit. Forms a multimeric L10(L12)X complex, where L10 forms an elongated spine to which 2 to 4 L12 dimers bind in a sequential fashion. Binds GTP-bound translation factors.

Forms part of the ribosomal stalk which helps the ribosome interact with GTP-bound translation factors. Is thus essential for accurate translation. The polypeptide is Large ribosomal subunit protein bL12 (Clostridioides difficile (strain 630) (Peptoclostridium difficile)).